The primary structure comprises 305 residues: 2-oxoacid:ferredoxin oxidoreductase subunit beta (305 aa).

3 residues coordinate [4Fe-4S] cluster: cysteine 12, cysteine 15, and cysteine 46. Thiamine diphosphate is bound by residues 44–47 and histidine 65; that span reads IGCS. Mg(2+) is bound at residue aspartate 90. 91–92 provides a ligand contact to thiamine diphosphate; sequence GD. Residues asparagine 118 and valine 120 each contribute to the Mg(2+) site. 122-123 contacts thiamine diphosphate; that stretch reads GL. Cysteine 197 provides a ligand contact to [4Fe-4S] cluster.

In terms of assembly, heterodimer composed of an alpha and a beta subunit. Requires [4Fe-4S] cluster as cofactor. It depends on thiamine diphosphate as a cofactor. Mg(2+) serves as cofactor.

The protein localises to the cytoplasm. It catalyses the reaction a 2-oxocarboxylate + 2 oxidized [2Fe-2S]-[ferredoxin] + CoA = an acyl-CoA + 2 reduced [2Fe-2S]-[ferredoxin] + CO2 + H(+). Its function is as follows. Catalyzes the coenzyme A-dependent oxidative decarboxylation of different 2-oxoacids such as 2-oxoglutarate, pyruvate and 2-oxobutyrate to form their CoA derivatives. This chain is 2-oxoacid:ferredoxin oxidoreductase subunit beta, found in Sulfolobus sp.